A 143-amino-acid chain; its full sequence is Ribulose bisphosphate carboxylase large chain (143 aa).

The propeptide occupies 1–2; it reads MS. Position 3 is an N-acetylproline (P3). Position 14 is an N6,N6,N6-trimethyllysine (K14). X123 provides a ligand contact to substrate.

Belongs to the RuBisCO large chain family. Type I subfamily. Heterohexadecamer of 8 large chains and 8 small chains.

It is found in the plastid. The protein resides in the chloroplast. The enzyme catalyses 2 (2R)-3-phosphoglycerate + 2 H(+) = D-ribulose 1,5-bisphosphate + CO2 + H2O. It catalyses the reaction D-ribulose 1,5-bisphosphate + O2 = 2-phosphoglycolate + (2R)-3-phosphoglycerate + 2 H(+). Functionally, ruBisCO catalyzes two reactions: the carboxylation of D-ribulose 1,5-bisphosphate, the primary event in carbon dioxide fixation, as well as the oxidative fragmentation of the pentose substrate in the photorespiration process. Both reactions occur simultaneously and in competition at the same active site. The protein is Ribulose bisphosphate carboxylase large chain (rbcL) of Nemopanthus mucronatus (Catberry).